The primary structure comprises 176 residues: Large ribosomal subunit protein eL6A (176 aa).

Serine 2 carries the post-translational modification N-acetylserine. A Phosphoserine modification is found at serine 12. Lysine 128 is covalently cross-linked (Glycyl lysine isopeptide (Lys-Gly) (interchain with G-Cter in ubiquitin)).

The protein belongs to the eukaryotic ribosomal protein eL6 family. As to quaternary structure, component of the large ribosomal subunit (LSU). Mature yeast ribosomes consist of a small (40S) and a large (60S) subunit. The 40S small subunit contains 1 molecule of ribosomal RNA (18S rRNA) and 33 different proteins (encoded by 57 genes). The large 60S subunit contains 3 rRNA molecules (25S, 5.8S and 5S rRNA) and 46 different proteins (encoded by 81 genes). Post-translationally, N-terminally acetylated by acetyltransferase NatA.

The protein localises to the cytoplasm. Functionally, component of the ribosome, a large ribonucleoprotein complex responsible for the synthesis of proteins in the cell. The small ribosomal subunit (SSU) binds messenger RNAs (mRNAs) and translates the encoded message by selecting cognate aminoacyl-transfer RNA (tRNA) molecules. The large subunit (LSU) contains the ribosomal catalytic site termed the peptidyl transferase center (PTC), which catalyzes the formation of peptide bonds, thereby polymerizing the amino acids delivered by tRNAs into a polypeptide chain. The nascent polypeptides leave the ribosome through a tunnel in the LSU and interact with protein factors that function in enzymatic processing, targeting, and the membrane insertion of nascent chains at the exit of the ribosomal tunnel. The protein is Large ribosomal subunit protein eL6A of Saccharomyces cerevisiae (strain ATCC 204508 / S288c) (Baker's yeast).